Reading from the N-terminus, the 1450-residue chain is DNA-directed RNA polymerase RPB1 homolog (1450 aa).

The protein belongs to the RNA polymerase beta' chain family. In terms of assembly, part of the viral DNA-directed RNA polymerase that consists of 8 polII-like subunits (RPB1, RPB2, RPB3, RPB5, RPB6, RPB7, RPB9, RPB10), a capping enzyme and a termination factor.

It localises to the virion. It catalyses the reaction RNA(n) + a ribonucleoside 5'-triphosphate = RNA(n+1) + diphosphate. In terms of biological role, catalytic component of the DNA-directed RNA polymerase (RNAP) that catalyzes the transcription in the cytoplasm of viral DNA into RNA using the four ribonucleoside triphosphates as substrates. Forms the polymerase active center together with RPB2. Part of the core element with the central large cleft, the clamp element that moves to open and close the cleft and the jaws that are thought to grab the incoming DNA template. This is DNA-directed RNA polymerase RPB1 homolog from African swine fever virus (isolate Pig/Kenya/KEN-50/1950) (ASFV).